Reading from the N-terminus, the 353-residue chain is UDP-N-acetylglucosamine--N-acetylmuramyl-(pentapeptide) pyrophosphoryl-undecaprenol N-acetylglucosamine transferase (353 aa).

UDP-N-acetyl-alpha-D-glucosamine-binding positions include 10–12 (TGG), asparagine 124, serine 183, and glutamine 283.

This sequence belongs to the glycosyltransferase 28 family. MurG subfamily.

It is found in the cell inner membrane. The catalysed reaction is di-trans,octa-cis-undecaprenyl diphospho-N-acetyl-alpha-D-muramoyl-L-alanyl-D-glutamyl-meso-2,6-diaminopimeloyl-D-alanyl-D-alanine + UDP-N-acetyl-alpha-D-glucosamine = di-trans,octa-cis-undecaprenyl diphospho-[N-acetyl-alpha-D-glucosaminyl-(1-&gt;4)]-N-acetyl-alpha-D-muramoyl-L-alanyl-D-glutamyl-meso-2,6-diaminopimeloyl-D-alanyl-D-alanine + UDP + H(+). The protein operates within cell wall biogenesis; peptidoglycan biosynthesis. Its function is as follows. Cell wall formation. Catalyzes the transfer of a GlcNAc subunit on undecaprenyl-pyrophosphoryl-MurNAc-pentapeptide (lipid intermediate I) to form undecaprenyl-pyrophosphoryl-MurNAc-(pentapeptide)GlcNAc (lipid intermediate II). This chain is UDP-N-acetylglucosamine--N-acetylmuramyl-(pentapeptide) pyrophosphoryl-undecaprenol N-acetylglucosamine transferase, found in Helicobacter pylori (strain G27).